The following is an 819-amino-acid chain: Endonuclease MutS2 (819 aa).

339–346 contacts ATP; it reads GPNTGGKT. Residues 744–819 enclose the Smr domain; sequence VDVRGLRVDE…GAGVTVAELA (76 aa).

The protein belongs to the DNA mismatch repair MutS family. MutS2 subfamily. In terms of assembly, homodimer. Binds to stalled ribosomes, contacting rRNA.

Its function is as follows. Endonuclease that is involved in the suppression of homologous recombination and thus may have a key role in the control of bacterial genetic diversity. Acts as a ribosome collision sensor, splitting the ribosome into its 2 subunits. Detects stalled/collided 70S ribosomes which it binds and splits by an ATP-hydrolysis driven conformational change. Acts upstream of the ribosome quality control system (RQC), a ribosome-associated complex that mediates the extraction of incompletely synthesized nascent chains from stalled ribosomes and their subsequent degradation. Probably generates substrates for RQC. The sequence is that of Endonuclease MutS2 from Gemmatimonas aurantiaca (strain DSM 14586 / JCM 11422 / NBRC 100505 / T-27).